The chain runs to 102 residues: Turripeptide OL55-like (102 aa).

Contains 8 disulfide bonds. Expressed by the venom duct.

The protein localises to the secreted. Acts as a neurotoxin by inhibiting an ion channel. The protein is Turripeptide OL55-like of Lophiotoma acuta (Marbled turris).